The chain runs to 322 residues: NADH oxidoreductase HCR (322 aa).

The 101-residue stretch at 7-107 (QCPWRMQVHH…SDAMGEFTCD (101 aa)) folds into the FAD-binding FR-type domain. The segment at 111–213 (EDKFLLLAAG…APYMDWVEQE (103 aa)) is oxidoreductase. A 2Fe-2S ferredoxin-type domain is found at 237-322 (SGLKFTKLQP…CHPQGDLVLA (86 aa)). The [2Fe-2S] cluster site is built by C273, C278, C281, and C311.

This sequence in the N-terminal section; belongs to the FAD-binding oxidoreductase type 6 family. It depends on [2Fe-2S] cluster as a cofactor. Requires FAD as cofactor.

NADH oxidoreductase acting in concert with HCP. The protein is NADH oxidoreductase HCR (hcr) of Escherichia coli (strain K12).